A 257-amino-acid chain; its full sequence is Chymotrypsin-like protease VLCTLP (257 aa).

An N-terminal signal peptide occupies residues 1 to 18 (MVLIRVLANLLLLQLSYA). Residues 19–24 (QKSSEL) constitute a propeptide that is removed on maturation. The 224-residue stretch at 25–248 (VVGGDECNIN…YSDWIQSIIA (224 aa)) folds into the Peptidase S1 domain. Intrachain disulfides connect cysteine 31/cysteine 162, cysteine 49/cysteine 65, cysteine 97/cysteine 255, cysteine 141/cysteine 209, cysteine 173/cysteine 188, and cysteine 199/cysteine 224. Asparagine 44 is a glycosylation site (N-linked (GlcNAc...) asparagine). The active-site Charge relay system is histidine 64. N-linked (GlcNAc...) asparagine glycosylation occurs at asparagine 100. The active-site Charge relay system is the aspartate 109. Residues asparagine 116 and asparagine 153 are each glycosylated (N-linked (GlcNAc...) asparagine). Catalysis depends on serine 203, which acts as the Charge relay system. Asparagine 250 carries N-linked (GlcNAc...) asparagine glycosylation.

The protein belongs to the peptidase S1 family. Snake venom subfamily. In terms of assembly, monomer. Partial deglycosylation has not effect on enzyme activity. As to expression, expressed by the venom gland.

Its subcellular location is the secreted. With respect to regulation, inhibited by PMSF. In terms of biological role, snake venom serine protease with tyrosine-specific chymotrypsin-like activity. Hydrolyzes the N-acetyl-L-tyrosine ethyl ester (ATEE). Has weak fibrinogenolytic activity. Weakly hydrolyzes azocasein, Aalpha-chain (FGA) and more slowly Bbeta-chain (FGB) of fibrinogen. Optimal substrates are angiotensins I and II (AGT). In Macrovipera lebetinus (Levantine viper), this protein is Chymotrypsin-like protease VLCTLP.